The sequence spans 485 residues: CUGBP Elav-like family member 5 (485 aa).

Over residues 1-11 the composition is skewed to basic and acidic residues; the sequence is MARLTESEARR. Residues 1-40 are disordered; it reads MARLTESEARRQQQQLLQPRPSPVGSSGPEPPGGQPDGMK. Low complexity predominate over residues 12-28; the sequence is QQQQLLQPRPSPVGSSG. RRM domains follow at residues 45–126, 134–214, and 400–478; these read IKLF…PADS, RKLF…FADT, and CNLF…LKRP.

It belongs to the CELF/BRUNOL family. In terms of tissue distribution, expressed in brain.

It is found in the nucleus. The protein localises to the cytoplasm. Functionally, RNA-binding protein implicated in the regulation of pre-mRNA alternative splicing. Mediates exon inclusion and/or exclusion in pre-mRNA that are subject to tissue-specific and developmentally regulated alternative splicing. Specifically activates exon 5 inclusion of cardiac isoforms of TNNT2 during heart remodeling at the juvenile to adult transition. Binds to muscle-specific splicing enhancer (MSE) intronic sites flanking the alternative exon 5 of TNNT2 pre-mRNA. This Homo sapiens (Human) protein is CUGBP Elav-like family member 5 (CELF5).